A 1076-amino-acid chain; its full sequence is Hormone-sensitive lipase (1076 aa).

2 stretches are compositionally biased toward polar residues: residues 1–12 (MEPGSKSVSRSD) and 38–64 (ESKT…QETP). Disordered stretches follow at residues 1–198 (MEPG…KSKQ) and 229–250 (VTDS…PATM). Residues 65–77 (AQHDAESQKEPRA) show a composition bias toward basic and acidic residues. Over residues 94 to 116 (APQQSPYIQRVLLTQQEAASQQG) the composition is skewed to polar residues. The segment covering 140–149 (GPGPGEPPPA) has biased composition (pro residues). Residues 150–161 (QQEAESTPAAQA) are compositionally biased toward low complexity. The segment covering 172-198 (PTESTSQETPEQSDKQTTPVQGAKSKQ) has biased composition (polar residues). Low complexity predominate over residues 237 to 246 (DVGSSSDTDS). Positions 651–653 (HGG) match the Involved in the stabilization of the negatively charged intermediate by the formation of the oxyanion hole motif. Ser-725 is a catalytic residue. Positions 838–930 (KSQKMSEPIA…EAEAKNELSP (93 aa)) are disordered. Position 853 is a phosphoserine (Ser-853). A Phosphoserine; by AMPK modification is found at Ser-855. Polar residues predominate over residues 882-908 (RGNSETSSDTPEMSLSAETLSPSTPSD). A phosphoserine mark is found at Ser-897, Ser-929, Ser-950, and Ser-951. Catalysis depends on residues Asp-994 and His-1024. Residues 1055 to 1076 (AGAGPSGETGAAGVDGGCGGRH) are disordered. Residues 1067–1076 (GVDGGCGGRH) are compositionally biased toward gly residues.

The protein belongs to the 'GDXG' lipolytic enzyme family. In terms of assembly, monomer and homodimer. Interacts with CAVIN1 in the adipocyte cytoplasm. Interacts with PLIN5. Post-translationally, phosphorylation by AMPK reduces its translocation towards the lipid droplets. In terms of tissue distribution, testis.

It is found in the cell membrane. The protein resides in the membrane. Its subcellular location is the caveola. It localises to the cytoplasm. The protein localises to the cytosol. It is found in the lipid droplet. It carries out the reaction a diacylglycerol + H2O = a monoacylglycerol + a fatty acid + H(+). It catalyses the reaction a triacylglycerol + H2O = a diacylglycerol + a fatty acid + H(+). The catalysed reaction is a monoacylglycerol + H2O = glycerol + a fatty acid + H(+). The enzyme catalyses Hydrolyzes glycerol monoesters of long-chain fatty acids.. It carries out the reaction 1,2-di-(9Z-octadecenoyl)-glycerol + (9Z)-octadecenoate + H(+) = 1,2,3-tri-(9Z-octadecenoyl)-glycerol + H2O. It catalyses the reaction 2,3-di-(9Z)-octadecenoyl-sn-glycerol + H2O = 2-(9Z-octadecenoyl)-glycerol + (9Z)-octadecenoate + H(+). The catalysed reaction is cholesteryl (9Z-octadecenoate) + H2O = cholesterol + (9Z)-octadecenoate + H(+). The enzyme catalyses 1,2,3-tri-(9Z-octadecenoyl)-glycerol + H2O = di-(9Z)-octadecenoylglycerol + (9Z)-octadecenoate + H(+). It carries out the reaction all-trans-retinyl hexadecanoate + H2O = all-trans-retinol + hexadecanoate + H(+). It catalyses the reaction 1,2-di-(9Z-octadecenoyl)-glycerol + H2O = (9Z-octadecenoyl)-glycerol + (9Z)-octadecenoate + H(+). The catalysed reaction is 2-(5Z,8Z,11Z,14Z-eicosatetraenoyl)-glycerol + H2O = glycerol + (5Z,8Z,11Z,14Z)-eicosatetraenoate + H(+). The enzyme catalyses 1-(9Z-octadecenoyl)-glycerol + H2O = glycerol + (9Z)-octadecenoate + H(+). It carries out the reaction 2-(9Z-octadecenoyl)-glycerol + H2O = glycerol + (9Z)-octadecenoate + H(+). It catalyses the reaction 1-O-hexadecyl-2-acetyl-sn-glycerol + H2O = 1-O-hexadecyl-sn-glycerol + acetate + H(+). The catalysed reaction is 1,2-di-(9Z-octadecenoyl)-sn-glycerol + H2O = (9Z-octadecenoyl)-glycerol + (9Z)-octadecenoate + H(+). The enzyme catalyses 1,3-di-(9Z-octadecenoyl)-glycerol + H2O = 1-(9Z-octadecenoyl)-glycerol + (9Z)-octadecenoate + H(+). It carries out the reaction 1,2-di-(9Z-octadecenoyl)-glycerol + H2O = 2-(9Z-octadecenoyl)-glycerol + (9Z)-octadecenoate + H(+). It participates in glycerolipid metabolism; triacylglycerol degradation. Retinyl ester hydrolase is inhibited by bis-p-nitrophenyl phosphate. In terms of biological role, lipase with broad substrate specificity, catalyzing the hydrolysis of triacylglycerols (TAGs), diacylglycerols (DAGs), monoacylglycerols (MAGs), cholesteryl esters and retinyl esters. Shows a preferential hydrolysis of DAGs over TAGs and MAGs and preferentially hydrolyzes the fatty acid (FA) esters at the sn-3 position of the glycerol backbone in DAGs. Preferentially hydrolyzes FA esters at the sn-1 and sn-2 positions of the glycerol backbone in TAGs. Catalyzes the hydrolysis of 2-arachidonoylglycerol, an endocannabinoid and of 2-acetyl monoalkylglycerol ether, the penultimate precursor of the pathway for de novo synthesis of platelet-activating factor. In adipose tissue and heart, it primarily hydrolyzes stored triglycerides to free fatty acids, while in steroidogenic tissues, it principally converts cholesteryl esters to free cholesterol for steroid hormone production. The polypeptide is Hormone-sensitive lipase (LIPE) (Homo sapiens (Human)).